The primary structure comprises 707 residues: Coiled-coil domain-containing protein 177 (707 aa).

2 disordered regions span residues methionine 1–arginine 65 and proline 183–threonine 294. Composition is skewed to low complexity over residues alanine 38–alanine 49, proline 183–alanine 215, and alanine 243–glutamate 258. At serine 311 the chain carries Phosphoserine. A coiled-coil region spans residues glycine 364–glutamate 605. Disordered regions lie at residues histidine 372–glutamate 426, lysine 454–histidine 581, glutamine 597–aspartate 637, and glutamate 652–lysine 707. Basic and acidic residues-rich tracts occupy residues arginine 377–arginine 392, valine 399–glutamate 426, lysine 454–glutamine 484, glutamine 491–alanine 514, glutamate 543–histidine 581, arginine 618–aspartate 637, and glutamate 652–alanine 664. The segment covering leucine 665–serine 675 has biased composition (low complexity). The span at histidine 677 to lysine 707 shows a compositional bias: basic and acidic residues.

The polypeptide is Coiled-coil domain-containing protein 177 (CCDC177) (Homo sapiens (Human)).